Consider the following 128-residue polypeptide: Large ribosomal subunit protein bL17 (128 aa).

Belongs to the bacterial ribosomal protein bL17 family. As to quaternary structure, part of the 50S ribosomal subunit. Contacts protein L32.

The polypeptide is Large ribosomal subunit protein bL17 (Hydrogenovibrio crunogenus (strain DSM 25203 / XCL-2) (Thiomicrospira crunogena)).